The following is a 388-amino-acid chain: Putative F-box protein At3g17490 (388 aa).

The F-box domain maps to 1–46 (MMMPHLSEDLVEEILSRVPAISLKRLRYTCKQWNALFNDQRFSKKH).

The polypeptide is Putative F-box protein At3g17490 (Arabidopsis thaliana (Mouse-ear cress)).